Here is a 177-residue protein sequence, read N- to C-terminus: RNA pyrophosphohydrolase (177 aa).

The region spanning glycine 6–lysine 149 is the Nudix hydrolase domain. A Nudix box motif is present at residues glycine 38 to glycine 59.

This sequence belongs to the Nudix hydrolase family. RppH subfamily. A divalent metal cation is required as a cofactor.

Accelerates the degradation of transcripts by removing pyrophosphate from the 5'-end of triphosphorylated RNA, leading to a more labile monophosphorylated state that can stimulate subsequent ribonuclease cleavage. This chain is RNA pyrophosphohydrolase, found in Cronobacter sakazakii (strain ATCC BAA-894) (Enterobacter sakazakii).